The primary structure comprises 203 residues: Ribosome maturation factor RimP (203 aa).

A disordered region spans residues 179–203 (VSSEGEDGGEARQAPKLNPKKPGKK).

Belongs to the RimP family.

It localises to the cytoplasm. Required for maturation of 30S ribosomal subunits. The sequence is that of Ribosome maturation factor RimP from Gluconobacter oxydans (strain 621H) (Gluconobacter suboxydans).